The sequence spans 642 residues: Threonine--tRNA ligase (642 aa).

Residues Met1–Thr63 form the TGS domain. The segment at Asp242–Pro533 is catalytic. Zn(2+) is bound by residues Cys334, His385, and His510.

The protein belongs to the class-II aminoacyl-tRNA synthetase family. Homodimer. Requires Zn(2+) as cofactor.

It is found in the cytoplasm. It catalyses the reaction tRNA(Thr) + L-threonine + ATP = L-threonyl-tRNA(Thr) + AMP + diphosphate + H(+). In terms of biological role, catalyzes the attachment of threonine to tRNA(Thr) in a two-step reaction: L-threonine is first activated by ATP to form Thr-AMP and then transferred to the acceptor end of tRNA(Thr). The protein is Threonine--tRNA ligase of Haloarcula marismortui (strain ATCC 43049 / DSM 3752 / JCM 8966 / VKM B-1809) (Halobacterium marismortui).